The chain runs to 225 residues: 3-dehydroquinate dehydratase (225 aa).

3-dehydroquinate contacts are provided by residues 30 to 32 and R62; that span reads EWR. H118 serves as the catalytic Proton donor/acceptor. Residue K143 is the Schiff-base intermediate with substrate of the active site. The 3-dehydroquinate site is built by R186, S205, and Q209.

The protein belongs to the type-I 3-dehydroquinase family. Homodimer.

It carries out the reaction 3-dehydroquinate = 3-dehydroshikimate + H2O. It participates in metabolic intermediate biosynthesis; chorismate biosynthesis; chorismate from D-erythrose 4-phosphate and phosphoenolpyruvate: step 3/7. Its function is as follows. Involved in the third step of the chorismate pathway, which leads to the biosynthesis of aromatic amino acids. Catalyzes the cis-dehydration of 3-dehydroquinate (DHQ) and introduces the first double bond of the aromatic ring to yield 3-dehydroshikimate. The protein is 3-dehydroquinate dehydratase of Streptococcus mutans serotype c (strain ATCC 700610 / UA159).